A 113-amino-acid chain; its full sequence is Integration host factor subunit alpha (113 aa).

It belongs to the bacterial histone-like protein family. In terms of assembly, heterodimer of an alpha and a beta chain.

Its function is as follows. This protein is one of the two subunits of integration host factor, a specific DNA-binding protein that functions in genetic recombination as well as in transcriptional and translational control. The sequence is that of Integration host factor subunit alpha from Rhodopseudomonas palustris (strain BisA53).